The chain runs to 271 residues: Ubiquitin thioesterase OTUB1 (271 aa).

Ala-2 carries the N-acetylalanine modification. Residue Ser-16 is modified to Phosphoserine. Tyr-26 bears the Phosphotyrosine; by SRC mark. One can recognise an OTU domain in the interval 80–271; that stretch reads SYIRKTRPDG…RPGHYDILYK (192 aa). The active site involves Asp-88. Cys-91 (nucleophile) is an active-site residue. Ubiquitin-conjugating enzyme E2 binding stretches follow at residues 130–138 and 169–177; these read FTEFTIEDF and DYLVVYLRL. The free ubiquitin binding stretch occupies residues 189-195; the sequence is FFEHFIE. The ubiquitin-conjugating enzyme E2 binding stretch occupies residues 206-213; that stretch reads QEVEPMCK. Free ubiquitin binding regions lie at residues 214-221 and 245-251; these read ESDHIHII and NPHIFPE. His-265 is an active-site residue.

The protein belongs to the peptidase C65 family. Interacts with FUS and RACK1. Interacts with UBE2D1/UBCH5A, UBE2W/UBC16 and UBE2N/UBC13. As to quaternary structure, interacts with RNF128. Forms a ternary complex with RNF128 and USP8. Interacts with the C-terminal UCH catalytic domain of USP8. In terms of assembly, interacts with RNF128. Does not associate with USP8. Post-translationally, phosphorylation at Tyr-26 by SRC and SRMS promotes deubiquitination of RPTOR via a non-catalytic process. In terms of tissue distribution, isoform 1 is ubiquitous. Isoform 2 is expressed only in lymphoid tissues such as tonsils, lymph nodes and spleen, as well as peripheral blood mononuclear cells.

The protein resides in the cytoplasm. The catalysed reaction is Thiol-dependent hydrolysis of ester, thioester, amide, peptide and isopeptide bonds formed by the C-terminal Gly of ubiquitin (a 76-residue protein attached to proteins as an intracellular targeting signal).. By free ubiquitin: binding of free ubiquitin triggers conformational changes in the OTU domain and formation of a ubiquitin-binding helix in the N-terminus, promoting binding of the conjugated donor ubiquitin in UBE2N/UBC13 to OTUB1. Functionally, hydrolase that can specifically remove 'Lys-48'-linked conjugated ubiquitin from proteins and plays an important regulatory role at the level of protein turnover by preventing degradation. Regulator of T-cell anergy, a phenomenon that occurs when T-cells are rendered unresponsive to antigen rechallenge and no longer respond to their cognate antigen. Acts via its interaction with RNF128/GRAIL, a crucial inductor of CD4 T-cell anergy. Isoform 1 destabilizes RNF128, leading to prevent anergy. In contrast, isoform 2 stabilizes RNF128 and promotes anergy. Surprisingly, it regulates RNF128-mediated ubiquitination, but does not deubiquitinate polyubiquitinated RNF128. Deubiquitinates estrogen receptor alpha (ESR1). Mediates deubiquitination of 'Lys-48'-linked polyubiquitin chains, but not 'Lys-63'-linked polyubiquitin chains. Not able to cleave di-ubiquitin. Also capable of removing NEDD8 from NEDD8 conjugates, but with a much lower preference compared to 'Lys-48'-linked ubiquitin. In terms of biological role, plays a key non-catalytic role in DNA repair regulation by inhibiting activity of RNF168, an E3 ubiquitin-protein ligase that promotes accumulation of 'Lys-63'-linked histone H2A and H2AX at DNA damage sites. Inhibits RNF168 independently of ubiquitin thioesterase activity by binding and inhibiting UBE2N/UBC13, the E2 partner of RNF168, thereby limiting spreading of 'Lys-63'-linked histone H2A and H2AX marks. Inhibition occurs by binding to free ubiquitin: free ubiquitin acts as an allosteric regulator that increases affinity for UBE2N/UBC13 and disrupts interaction with UBE2V1. The OTUB1-UBE2N/UBC13-free ubiquitin complex adopts a configuration that mimics a cleaved 'Lys48'-linked di-ubiquitin chain. Acts as a regulator of mTORC1 and mTORC2 complexes. When phosphorylated at Tyr-26, acts as an activator of the mTORC1 complex by mediating deubiquitination of RPTOR via a non-catalytic process: acts by binding and inhibiting the activity of the ubiquitin-conjugating enzyme E2 (UBE2D1/UBCH5A, UBE2W/UBC16 and UBE2N/UBC13), thereby preventing ubiquitination of RPTOR. Can also act as an inhibitor of the mTORC1 and mTORC2 complexes in response to amino acids by mediating non-catalytic deubiquitination of DEPTOR. The sequence is that of Ubiquitin thioesterase OTUB1 (OTUB1) from Homo sapiens (Human).